A 1014-amino-acid chain; its full sequence is Ephrin type-B receptor 6 (1014 aa).

The N-terminal stretch at 1–32 is a signal peptide; the sequence is MATEGTTGSGSRVVAGMVCSLWLLVLGSSVLA. Residues 33-591 lie on the Extracellular side of the membrane; sequence LEEVLLDTTG…LPEKLSLVIG (559 aa). Residues 34-232 form the Eph LBD domain; that stretch reads EEVLLDTTGE…FSYTCPSVLR (199 aa). Fibronectin type-III domains lie at 364-479 and 480-575; these read PPSA…TSHE and VPSA…TLPQ. An N-linked (GlcNAc...) asparagine glycan is attached at asparagine 473. The chain crosses the membrane as a helical span at residues 592–612; it reads SILGALAFLLLAAITVLAVIF. The Cytoplasmic portion of the chain corresponds to 613–1014; the sequence is QRKRRGTGYT…HLRQPGSVEV (402 aa). One can recognise a Protein kinase domain in the interval 663–912; the sequence is IKIEEVIGAG…QLVAAFDKMI (250 aa). 669–677 serves as a coordination point for ATP; the sequence is IGAGSFGEV. The SAM domain maps to 941–1005; that stretch reads PCLDSPQAWL…LHNIQLLQQH (65 aa). The PDZ-binding motif lies at 1012–1014; it reads VEV.

Belongs to the protein kinase superfamily. Tyr protein kinase family. Ephrin receptor subfamily. Interacts with CBL and EPHB1. Interacts with FYN; this interaction takes place in a ligand-independent manner. In terms of processing, ligand-binding increases phosphorylation on tyrosine residues. Phosphorylation on tyrosine residues is mediated by transphosphorylation by the catalytically active EPHB1 in a ligand-independent manner. Tyrosine phosphorylation of the receptor may act as a switch on the functional transition from cell adhesion/attraction to de-adhesion/repulsion. High level in thymus, and brain. Very low levels of expression in kidney, lung, liver, bone marrow, skeletal muscle, spleen from 2 week old and adult mice, heart, testes and embryonic stem cells.

It localises to the cell membrane. The protein localises to the secreted. Functionally, kinase-defective receptor for members of the ephrin-B family. Binds to ephrin-B1 and ephrin-B2. Modulates cell adhesion and migration by exerting both positive and negative effects upon stimulation with ephrin-B2. Inhibits JNK activation, T-cell receptor-induced IL-2 secretion and CD25 expression upon stimulation with ephrin-B2. This is Ephrin type-B receptor 6 (Ephb6) from Mus musculus (Mouse).